Here is a 419-residue protein sequence, read N- to C-terminus: Putative zinc metalloprotease SP_0263 (419 aa).

His-18 is a Zn(2+) binding site. Residue Glu-19 is part of the active site. His-22 is a Zn(2+) binding site. Helical transmembrane passes span 169–191 (LITN…WVLI), 345–367 (ILYF…IPAL), and 388–410 (EIET…AVTW).

It belongs to the peptidase M50B family. Zn(2+) serves as cofactor.

It localises to the cell membrane. This Streptococcus pneumoniae serotype 4 (strain ATCC BAA-334 / TIGR4) protein is Putative zinc metalloprotease SP_0263.